We begin with the raw amino-acid sequence, 189 residues long: Interferon alpha-21 (189 aa).

Residues 1–23 (MALSFSLLMAVLVLSYKSICSLG) form the signal peptide. 2 disulfides stabilise this stretch: Cys24-Cys122 and Cys52-Cys162.

This sequence belongs to the alpha/beta interferon family.

The protein localises to the secreted. Produced by macrophages, IFN-alpha have antiviral activities. Interferon stimulates the production of two enzymes: a protein kinase and an oligoadenylate synthetase. The chain is Interferon alpha-21 (IFNA21) from Homo sapiens (Human).